The following is a 438-amino-acid chain: MAEISSVPFAEPPYLRGLPSPYYNESHRRFQKACRAFLYENLLKHAMEWEKAGTVPEHVFSDFCKANMLLPNLPAPLPVAWLKRLGIHDILGVKVEEWDYLHTGIYSDEMARSGLSGPSGSLTAGFAFGTPPIIKYGSKELQEKFLPDLLTGKKRNCIAITEPDAGSDVAGITTTATKSADGKYYIVNGNKKWITNGIWSDYSTMAVRTGGPGAGGLSLLVVPLKNYPGVTMQRLKVSGQITGGTTYIELDEVKVPVENLIGLEGDGMKMIMNNFNHERLTIAVGVTRQARVALSTAFSYCLKREAFGKTLMDQPVVRHRLAKAGAELETMWAFVEQLLYQLTNLPKEEADRQLGGITAMAKAKGAMVLNECAQTAVLLFGGAGFTKQGQGELAEAILRDVPGARIPGGSEDVLLDLSIRQLVKLFKAEEKKLGKARI.

This sequence belongs to the acyl-CoA dehydrogenase family. FAD is required as a cofactor.

The protein operates within secondary metabolite biosynthesis. Functionally, acyl-CoA dehydrogenase; part of the gene cluster that mediates the biosynthesis of aspyridones. The polyketide-amino acid backbone preaspyridone A is first assembled by the PKS-NRPS hybrid apdA. The assembly of preaspyridone A is initiated by loading of malonyl-CoA onto apdA, followed by decarboxylation to yield the acetyl starter unit. The growing polyketide chain then elongates into a tetraketide. The adpA PKS module catalyzes three Claisen condensations, as well as beta-keto processing and methylation. Alpha-methylation step during polyketide synthesis is a prerequisite and a key checkpoint for chain transfer between PKS and NRPS modules. The downstream NRPS module contains the condensation (C), adenylation (A), and thiolation (T) domains and catalyzes the incorporation of tyrosine via the formation of the L-tyrosinyl-thioester and the amide linkage between L-tyrosinyl-thioester and the tetraketide. The bimodular assembly line is terminated with a reductase (R) domain that facilitates formation and release of the tetramic acid product. Because apdA lacks a designated enoylreductase (ER) domain, the required activity is provided the enoyl reductase apdC. ApdC appears to operate with different stereoselectivity in different PKS cycle. Combined with apdC, apdA is proposed to synthesize preaspyridone A via about 20 enzymatic steps. A number of oxidative steps performed successively by the cytochrome P450 monooxygenases apdE and apdB are required for the conversion of preaspyridone A to aspyridone A. The cytochrome P450 monooxygenase apdE is responsible for the oxidative dephenylation of preaspyridone A. Finally, the predicted FAD-dependent monooxygenase apdD and the acyl-CoA dehydrogenase apdG may be involved in the transformation of aspyridone A into aspyridone B. The protein is Acyl-CoA dehydrogenase apdG of Emericella nidulans (strain FGSC A4 / ATCC 38163 / CBS 112.46 / NRRL 194 / M139) (Aspergillus nidulans).